Consider the following 89-residue polypeptide: Small ribosomal subunit protein uS19 (89 aa).

The protein belongs to the universal ribosomal protein uS19 family.

In terms of biological role, protein S19 forms a complex with S13 that binds strongly to the 16S ribosomal RNA. This is Small ribosomal subunit protein uS19 from Xylella fastidiosa (strain M23).